Consider the following 228-residue polypeptide: ATP synthase F(0) complex subunit a (228 aa).

Transmembrane regions (helical) follow at residues 13–33 (NILA…IFPM), 69–89 (WALI…LGLL), 98–118 (QLSM…LIGL), 139–159 (IPTL…ALGV), and 194–214 (ILLF…ALVF).

The protein belongs to the ATPase A chain family. In terms of assembly, component of the ATP synthase complex composed at least of ATP5F1A/subunit alpha, ATP5F1B/subunit beta, ATP5MC1/subunit c (homooctomer), MT-ATP6/subunit a, MT-ATP8/subunit 8, ATP5ME/subunit e, ATP5MF/subunit f, ATP5MG/subunit g, ATP5MK/subunit k, ATP5MJ/subunit j, ATP5F1C/subunit gamma, ATP5F1D/subunit delta, ATP5F1E/subunit epsilon, ATP5PF/subunit F6, ATP5PB/subunit b, ATP5PD/subunit d, ATP5PO/subunit OSCP. ATP synthase complex consists of a soluble F(1) head domain (subunits alpha(3) and beta(3)) - the catalytic core - and a membrane F(0) domain - the membrane proton channel (subunits c, a, 8, e, f, g, k and j). These two domains are linked by a central stalk (subunits gamma, delta, and epsilon) rotating inside the F1 region and a stationary peripheral stalk (subunits F6, b, d, and OSCP). Interacts with DNAJC30; interaction is direct.

The protein localises to the mitochondrion inner membrane. It carries out the reaction H(+)(in) = H(+)(out). Its function is as follows. Subunit a, of the mitochondrial membrane ATP synthase complex (F(1)F(0) ATP synthase or Complex V) that produces ATP from ADP in the presence of a proton gradient across the membrane which is generated by electron transport complexes of the respiratory chain. ATP synthase complex consist of a soluble F(1) head domain - the catalytic core - and a membrane F(1) domain - the membrane proton channel. These two domains are linked by a central stalk rotating inside the F(1) region and a stationary peripheral stalk. During catalysis, ATP synthesis in the catalytic domain of F(1) is coupled via a rotary mechanism of the central stalk subunits to proton translocation. With the subunit c (ATP5MC1), forms the proton-conducting channel in the F(0) domain, that contains two crucial half-channels (inlet and outlet) that facilitate proton movement from the mitochondrial intermembrane space (IMS) into the matrix. Protons are taken up via the inlet half-channel and released through the outlet half-channel, following a Grotthuss mechanism. This is ATP synthase F(0) complex subunit a from Pelomedusa subrufa (African side-necked turtle).